Consider the following 430-residue polypeptide: CinA-like protein (430 aa).

Belongs to the CinA family.

This is CinA-like protein from Prochlorococcus marinus (strain NATL2A).